We begin with the raw amino-acid sequence, 433 residues long: Cysteine--tRNA ligase (433 aa).

C4 provides a ligand contact to Zn(2+). The 'HIGH' region motif lies at 6–16 (PTVYDTAHIGN). The Zn(2+) site is built by C188, H213, and E217. The 'KMSKS' region motif lies at 246-250 (KMSKS). K249 is a binding site for ATP.

This sequence belongs to the class-I aminoacyl-tRNA synthetase family. In terms of assembly, monomer. It depends on Zn(2+) as a cofactor.

The protein resides in the cytoplasm. The catalysed reaction is tRNA(Cys) + L-cysteine + ATP = L-cysteinyl-tRNA(Cys) + AMP + diphosphate. This Wolbachia sp. subsp. Brugia malayi (strain TRS) protein is Cysteine--tRNA ligase.